The sequence spans 138 residues: Basic phospholipase A2 homolog bothropstoxin-II (138 aa).

The first 16 residues, 1-16, serve as a signal peptide directing secretion; sequence MRTLWIMAVLLVGVEG. Cystine bridges form between C42/C131, C44/C60, C59/C111, C65/C138, C66/C104, C73/C97, and C91/C102. The interval 121–133 is important for membrane-damaging activities in eukaryotes and bacteria; heparin-binding; the sequence is KRYMAYPDVLCKK.

It belongs to the phospholipase A2 family. Group II subfamily. D49 sub-subfamily. In terms of assembly, homodimer; non-covalently linked (probable alternative/compact dimer conformation). As to expression, expressed by the venom gland.

It localises to the secreted. Snake venom phospholipase A2 (PLA2) that shows low enzymatic activity even tough it conserves the catalytic residues. Shows a strong myotoxic activity and induces indirect hemolysis, anticoagulant properties, and cytotoxic activities. In vivo, it induces muscle necrosis, accompanied by polymorphonuclear cell infiltration, and edema in the mouse paw. It exerts its function even in the absence of extracellular calcium, indicating it is not a calcium-dependent enzyme. A model of myotoxic mechanism has been proposed: an apo Lys49-PLA2 is activated by the entrance of a hydrophobic molecule (e.g. fatty acid) at the hydrophobic channel of the protein leading to a reorientation of a monomer. This reorientation causes a transition between 'inactive' to 'active' states, causing alignment of C-terminal and membrane-docking sites (MDoS) side-by-side and putting the membrane-disruption sites (MDiS) in the same plane, exposed to solvent and in a symmetric position for both monomers. The MDoS region stabilizes the toxin on membrane by the interaction of charged residues with phospholipid head groups. Subsequently, the MDiS region destabilizes the membrane with penetration of hydrophobic residues. This insertion causes a disorganization of the membrane, allowing an uncontrolled influx of ions (i.e. calcium and sodium), and eventually triggering irreversible intracellular alterations and cell death. This Bothrops jararacussu (Jararacussu) protein is Basic phospholipase A2 homolog bothropstoxin-II.